A 527-amino-acid chain; its full sequence is MTRQAAEVAKRRTFAIISHPDAGKTTITEKLLLMGKAIAVAGTVKSRKSDRHATSDWMEMEKQRGISITTSVMQFPYREHMINLLDTPGHEDFSEDTYRTLTAVDSALMVLDGGKGVEPRTIALMDVCRLRDTPIVSFINKLDRDIRDPIELLDEIEAVLKIKAAPITWPIGCYRDFKGVYHLADDYIIVYTAGHGHERTETKIIEKLDSDEARAHLGDEYERFLEQLELVQGACHEFNQQEFLDGQLTPVFFGTALGNFGVDHVLDAVVDWAPRPLPRVANERTVEPVEEKFSGFIFKIQANMDPKHRDRIAFMRICSGKYEKGMKMRHVRTGKDVRIGDALTFFSSEREQLEEAYAGDIIGLHNHGTIQIGDTFSEGETLGFTGIPHFAPELFRRVRLRDPLKSKQLRQGLQQLAEEGATQVFFPERSNDIILGAVGVLQFDVVASRLKEEYKVECSYEPITVYSARWIECSDKKKLEEFSNKAVENLALDGGGHLTYLAPTRVNLALMEERWPDVKFRATREHH.

The tr-type G domain occupies 9 to 277 (AKRRTFAIIS…AVVDWAPRPL (269 aa)). GTP-binding positions include 18–25 (SHPDAGKT), 86–90 (DTPGH), and 140–143 (NKLD).

It belongs to the TRAFAC class translation factor GTPase superfamily. Classic translation factor GTPase family. PrfC subfamily.

The protein resides in the cytoplasm. Functionally, increases the formation of ribosomal termination complexes and stimulates activities of RF-1 and RF-2. It binds guanine nucleotides and has strong preference for UGA stop codons. It may interact directly with the ribosome. The stimulation of RF-1 and RF-2 is significantly reduced by GTP and GDP, but not by GMP. This Pseudomonas fluorescens (strain Pf0-1) protein is Peptide chain release factor 3.